The following is an 81-amino-acid chain: Conotoxin Lt6.4 (81 aa).

Positions 1–19 (MKLVLAIVLILMFLSLSAG) are cleaved as a signal peptide. Positions 20 to 42 (AETSDNGVSRGGHRPQYWPVTPP) are excised as a propeptide. Cystine bridges form between Cys-46–Cys-60, Cys-53–Cys-65, and Cys-59–Cys-80.

It belongs to the conotoxin I3 superfamily. Expressed by the venom duct.

Its subcellular location is the secreted. In Conus litteratus (Lettered cone), this protein is Conotoxin Lt6.4.